The sequence spans 44 residues: MADKPDMAEIEKFDKSKLKKTETQEKNPLPSKETIEQEKQAGES.

Residues 1-25 are compositionally biased toward basic and acidic residues; the sequence is MADKPDMAEIEKFDKSKLKKTETQE. The disordered stretch occupies residues 1 to 44; that stretch reads MADKPDMAEIEKFDKSKLKKTETQEKNPLPSKETIEQEKQAGES. At A2 the chain carries N-acetylalanine. An N6-acetyllysine modification is found at K4. K12 is modified (N6-acetyllysine; alternate). A Glycyl lysine isopeptide (Lys-Gly) (interchain with G-Cter in SUMO2); alternate cross-link involves residue K12. At T23 the chain carries Phosphothreonine. K26 bears the N6-acetyllysine mark. S31 is subject to Phosphoserine. K32 bears the N6-acetyllysine mark. The span at 33–44 shows a compositional bias: basic and acidic residues; that stretch reads ETIEQEKQAGES. T34 bears the Phosphothreonine mark. Position 39 is an N6-acetyllysine (K39).

The protein belongs to the thymosin beta family. As to expression, originally found in thymus but it is widely distributed in many tissues.

The protein localises to the cytoplasm. It localises to the cytoskeleton. Its function is as follows. Plays an important role in the organization of the cytoskeleton. Binds to and sequesters actin monomers (G actin) and therefore inhibits actin polymerization. In terms of biological role, seraspenide inhibits the entry of hematopoietic pluripotent stem cells into the S-phase. The chain is Thymosin beta-4 (TMSB4) from Oryctolagus cuniculus (Rabbit).